Here is a 486-residue protein sequence, read N- to C-terminus: Glutamate--tRNA ligase (486 aa).

The short motif at 12–22 (PSPTGTPHVGL) is the 'HIGH' region element. The short motif at 256 to 260 (KLSKR) is the 'KMSKS' region element. Lys259 lines the ATP pocket.

This sequence belongs to the class-I aminoacyl-tRNA synthetase family. Glutamate--tRNA ligase type 1 subfamily. In terms of assembly, monomer.

The protein localises to the cytoplasm. The enzyme catalyses tRNA(Glu) + L-glutamate + ATP = L-glutamyl-tRNA(Glu) + AMP + diphosphate. Functionally, catalyzes the attachment of glutamate to tRNA(Glu) in a two-step reaction: glutamate is first activated by ATP to form Glu-AMP and then transferred to the acceptor end of tRNA(Glu). This Mycolicibacterium smegmatis (strain ATCC 700084 / mc(2)155) (Mycobacterium smegmatis) protein is Glutamate--tRNA ligase.